The following is a 257-amino-acid chain: Deoxyribose-phosphate aldolase (257 aa).

Asp-102 (proton donor/acceptor) is an active-site residue. The Schiff-base intermediate with acetaldehyde role is filled by Lys-165. Lys-199 acts as the Proton donor/acceptor in catalysis.

The protein belongs to the DeoC/FbaB aldolase family. DeoC type 2 subfamily.

It localises to the cytoplasm. The enzyme catalyses 2-deoxy-D-ribose 5-phosphate = D-glyceraldehyde 3-phosphate + acetaldehyde. Its pathway is carbohydrate degradation; 2-deoxy-D-ribose 1-phosphate degradation; D-glyceraldehyde 3-phosphate and acetaldehyde from 2-deoxy-alpha-D-ribose 1-phosphate: step 2/2. Catalyzes a reversible aldol reaction between acetaldehyde and D-glyceraldehyde 3-phosphate to generate 2-deoxy-D-ribose 5-phosphate. The polypeptide is Deoxyribose-phosphate aldolase (Photobacterium profundum (strain SS9)).